The chain runs to 217 residues: Peptide methionine sulfoxide reductase MsrA 1 (217 aa).

Cys57 is an active-site residue.

It belongs to the MsrA Met sulfoxide reductase family.

The catalysed reaction is L-methionyl-[protein] + [thioredoxin]-disulfide + H2O = L-methionyl-(S)-S-oxide-[protein] + [thioredoxin]-dithiol. It catalyses the reaction [thioredoxin]-disulfide + L-methionine + H2O = L-methionine (S)-S-oxide + [thioredoxin]-dithiol. In terms of biological role, has an important function as a repair enzyme for proteins that have been inactivated by oxidation. Catalyzes the reversible oxidation-reduction of methionine sulfoxide in proteins to methionine. The polypeptide is Peptide methionine sulfoxide reductase MsrA 1 (msrA1) (Rhizobium meliloti (strain 1021) (Ensifer meliloti)).